We begin with the raw amino-acid sequence, 268 residues long: 4-diphosphocytidyl-2-C-methyl-D-erythritol kinase (268 aa).

K10 is a catalytic residue. 101-111 contacts ATP; sequence PTQAGLGGGST. Residue D143 is part of the active site.

This sequence belongs to the GHMP kinase family. IspE subfamily.

It catalyses the reaction 4-CDP-2-C-methyl-D-erythritol + ATP = 4-CDP-2-C-methyl-D-erythritol 2-phosphate + ADP + H(+). It functions in the pathway isoprenoid biosynthesis; isopentenyl diphosphate biosynthesis via DXP pathway; isopentenyl diphosphate from 1-deoxy-D-xylulose 5-phosphate: step 3/6. Catalyzes the phosphorylation of the position 2 hydroxy group of 4-diphosphocytidyl-2C-methyl-D-erythritol. This chain is 4-diphosphocytidyl-2-C-methyl-D-erythritol kinase, found in Helicobacter pylori (strain ATCC 700392 / 26695) (Campylobacter pylori).